The primary structure comprises 310 residues: Aspartate carbamoyltransferase catalytic subunit (310 aa).

Carbamoyl phosphate is bound by residues Arg58 and Thr59. Position 86 (Lys86) interacts with L-aspartate. 3 residues coordinate carbamoyl phosphate: Arg108, His136, and Gln139. 2 residues coordinate L-aspartate: Arg169 and Arg222. Residues Gly264 and Pro265 each contribute to the carbamoyl phosphate site.

The protein belongs to the aspartate/ornithine carbamoyltransferase superfamily. ATCase family. As to quaternary structure, heterododecamer (2C3:3R2) of six catalytic PyrB chains organized as two trimers (C3), and six regulatory PyrI chains organized as three dimers (R2).

The enzyme catalyses carbamoyl phosphate + L-aspartate = N-carbamoyl-L-aspartate + phosphate + H(+). The protein operates within pyrimidine metabolism; UMP biosynthesis via de novo pathway; (S)-dihydroorotate from bicarbonate: step 2/3. Functionally, catalyzes the condensation of carbamoyl phosphate and aspartate to form carbamoyl aspartate and inorganic phosphate, the committed step in the de novo pyrimidine nucleotide biosynthesis pathway. This Campylobacter fetus subsp. fetus (strain 82-40) protein is Aspartate carbamoyltransferase catalytic subunit.